A 207-amino-acid chain; its full sequence is Large ribosomal subunit protein uL4 (207 aa).

Residues 48-87 (THAVKNRSAVSGGGKKPWRQKGTGRARQGSIRSPQFRGGG) form a disordered region.

Belongs to the universal ribosomal protein uL4 family. As to quaternary structure, part of the 50S ribosomal subunit.

Its function is as follows. One of the primary rRNA binding proteins, this protein initially binds near the 5'-end of the 23S rRNA. It is important during the early stages of 50S assembly. It makes multiple contacts with different domains of the 23S rRNA in the assembled 50S subunit and ribosome. Functionally, forms part of the polypeptide exit tunnel. The protein is Large ribosomal subunit protein uL4 of Limosilactobacillus reuteri subsp. reuteri (strain JCM 1112) (Lactobacillus reuteri).